Consider the following 190-residue polypeptide: Bifunctional protein PyrR (190 aa).

The PRPP-binding signature appears at 107 to 119 (IILVDDVLYSGRT).

The protein belongs to the purine/pyrimidine phosphoribosyltransferase family. PyrR subfamily.

It carries out the reaction UMP + diphosphate = 5-phospho-alpha-D-ribose 1-diphosphate + uracil. Functionally, regulates the transcription of the pyrimidine nucleotide (pyr) operon in response to exogenous pyrimidines. In terms of biological role, also displays a weak uracil phosphoribosyltransferase activity which is not physiologically significant. The chain is Bifunctional protein PyrR from Corynebacterium diphtheriae (strain ATCC 700971 / NCTC 13129 / Biotype gravis).